The following is a 153-amino-acid chain: 3-hydroxyacyl-[acyl-carrier-protein] dehydratase FabZ (153 aa).

Histidine 54 is an active-site residue.

It belongs to the thioester dehydratase family. FabZ subfamily.

Its subcellular location is the cytoplasm. The catalysed reaction is a (3R)-hydroxyacyl-[ACP] = a (2E)-enoyl-[ACP] + H2O. Functionally, involved in unsaturated fatty acids biosynthesis. Catalyzes the dehydration of short chain beta-hydroxyacyl-ACPs and long chain saturated and unsaturated beta-hydroxyacyl-ACPs. The chain is 3-hydroxyacyl-[acyl-carrier-protein] dehydratase FabZ from Shewanella amazonensis (strain ATCC BAA-1098 / SB2B).